Consider the following 132-residue polypeptide: Small ribosomal subunit protein uS13 (132 aa).

Positions 106-132 are disordered; sequence PVRGQVTQKNARTRKGPRKTVAGKKGK. Over residues 116 to 132 the composition is skewed to basic residues; the sequence is ARTRKGPRKTVAGKKGK.

This sequence belongs to the universal ribosomal protein uS13 family. As to quaternary structure, part of the 30S ribosomal subunit. Forms a loose heterodimer with protein S19. Forms two bridges to the 50S subunit in the 70S ribosome.

Located at the top of the head of the 30S subunit, it contacts several helices of the 16S rRNA. In the 70S ribosome it contacts the 23S rRNA (bridge B1a) and protein L5 of the 50S subunit (bridge B1b), connecting the 2 subunits; these bridges are implicated in subunit movement. Contacts the tRNAs in the A and P-sites. In Mycoplasmopsis pulmonis (strain UAB CTIP) (Mycoplasma pulmonis), this protein is Small ribosomal subunit protein uS13.